Consider the following 172-residue polypeptide: Ribosome maturation factor RimM (172 aa).

One can recognise a PRC barrel domain in the interval 99 to 171 (DDIPTWNYFI…LLTVEVPDGL (73 aa)).

The protein belongs to the RimM family. As to quaternary structure, binds ribosomal protein uS19.

The protein resides in the cytoplasm. Functionally, an accessory protein needed during the final step in the assembly of 30S ribosomal subunit, possibly for assembly of the head region. Essential for efficient processing of 16S rRNA. May be needed both before and after RbfA during the maturation of 16S rRNA. It has affinity for free ribosomal 30S subunits but not for 70S ribosomes. The sequence is that of Ribosome maturation factor RimM from Phocaeicola vulgatus (strain ATCC 8482 / DSM 1447 / JCM 5826 / CCUG 4940 / NBRC 14291 / NCTC 11154) (Bacteroides vulgatus).